Here is a 208-residue protein sequence, read N- to C-terminus: Large ribosomal subunit protein bL25 (208 aa).

Residues 178–208 (LPPQQSEVPEPDSEEEPKEPEAIKEKDNDGE) form a disordered region. Residues 186–195 (PEPDSEEEPK) show a composition bias toward acidic residues. Basic and acidic residues predominate over residues 196–208 (EPEAIKEKDNDGE).

It belongs to the bacterial ribosomal protein bL25 family. CTC subfamily. Part of the 50S ribosomal subunit; part of the 5S rRNA/L5/L18/L25 subcomplex. Contacts the 5S rRNA. Binds to the 5S rRNA independently of L5 and L18.

This is one of the proteins that binds to the 5S RNA in the ribosome where it forms part of the central protuberance. The sequence is that of Large ribosomal subunit protein bL25 from Bacillus pumilus (strain SAFR-032).